A 52-amino-acid chain; its full sequence is Large ribosomal subunit protein bL33 (52 aa).

The protein belongs to the bacterial ribosomal protein bL33 family.

In Chlamydia pneumoniae (Chlamydophila pneumoniae), this protein is Large ribosomal subunit protein bL33 (rpmG).